A 439-amino-acid polypeptide reads, in one-letter code: Trigger factor (439 aa).

In terms of domain architecture, PPIase FKBP-type spans 170 to 255 (GDTVVIDFDG…IHELKKLETP (86 aa)).

The protein belongs to the FKBP-type PPIase family. Tig subfamily.

The protein localises to the cytoplasm. It carries out the reaction [protein]-peptidylproline (omega=180) = [protein]-peptidylproline (omega=0). In terms of biological role, involved in protein export. Acts as a chaperone by maintaining the newly synthesized protein in an open conformation. Functions as a peptidyl-prolyl cis-trans isomerase. This chain is Trigger factor, found in Oenococcus oeni (strain ATCC BAA-331 / PSU-1).